The following is a 66-amino-acid chain: Beta-defensin 107A (66 aa).

Residues 1–22 form the signal peptide; it reads MKIFFFIFAALILLAQIFQART. 2 disulfide bridges follow: Cys-37–Cys-51 and Cys-41–Cys-60.

This sequence belongs to the beta-defensin family.

The protein localises to the secreted. Functionally, has antibacterial activity. In Macaca fascicularis (Crab-eating macaque), this protein is Beta-defensin 107A (DEFB107A).